We begin with the raw amino-acid sequence, 70 residues long: Uteroglobin (70 aa).

It belongs to the secretoglobin family. In terms of assembly, antiparallel homodimer; disulfide-linked. Interaction with LMBR1L is controversial. As to expression, club cells (nonciliated cells of the surface epithelium of the pulmonary airways).

It is found in the secreted. In terms of biological role, binds phosphatidylcholine, phosphatidylinositol, polychlorinated biphenyls (PCB) and weakly progesterone, potent inhibitor of phospholipase A2. This is Uteroglobin (SCGB1A1) from Macaca fuscata fuscata (Japanese macaque).